The sequence spans 447 residues: Tubulin beta chain (447 aa).

Positions 11, 69, 138, 142, 143, 144, 204, and 226 each coordinate GTP. Position 69 (glutamate 69) interacts with Mg(2+). The segment at 424–447 (QYQEASVSEGEEEYDEEAPLEGEE) is disordered. Over residues 432-447 (EGEEEYDEEAPLEGEE) the composition is skewed to acidic residues.

Belongs to the tubulin family. In terms of assembly, dimer of alpha and beta chains. A typical microtubule is a hollow water-filled tube with an outer diameter of 25 nm and an inner diameter of 15 nM. Alpha-beta heterodimers associate head-to-tail to form protofilaments running lengthwise along the microtubule wall with the beta-tubulin subunit facing the microtubule plus end conferring a structural polarity. Microtubules usually have 13 protofilaments but different protofilament numbers can be found in some organisms and specialized cells. Mg(2+) serves as cofactor.

It is found in the cytoplasm. The protein resides in the cytoskeleton. Tubulin is the major constituent of microtubules, a cylinder consisting of laterally associated linear protofilaments composed of alpha- and beta-tubulin heterodimers. Microtubules grow by the addition of GTP-tubulin dimers to the microtubule end, where a stabilizing cap forms. Below the cap, tubulin dimers are in GDP-bound state, owing to GTPase activity of alpha-tubulin. The sequence is that of Tubulin beta chain (TUB1) from Dothistroma septosporum (Red band needle blight fungus).